A 305-amino-acid chain; its full sequence is UDP-3-O-acyl-N-acetylglucosamine deacetylase (305 aa).

Zn(2+) contacts are provided by His78, His237, and Asp241. His264 (proton donor) is an active-site residue.

The protein belongs to the LpxC family. Requires Zn(2+) as cofactor.

The enzyme catalyses a UDP-3-O-[(3R)-3-hydroxyacyl]-N-acetyl-alpha-D-glucosamine + H2O = a UDP-3-O-[(3R)-3-hydroxyacyl]-alpha-D-glucosamine + acetate. The protein operates within glycolipid biosynthesis; lipid IV(A) biosynthesis; lipid IV(A) from (3R)-3-hydroxytetradecanoyl-[acyl-carrier-protein] and UDP-N-acetyl-alpha-D-glucosamine: step 2/6. In terms of biological role, catalyzes the hydrolysis of UDP-3-O-myristoyl-N-acetylglucosamine to form UDP-3-O-myristoylglucosamine and acetate, the committed step in lipid A biosynthesis. The polypeptide is UDP-3-O-acyl-N-acetylglucosamine deacetylase (Burkholderia cenocepacia (strain HI2424)).